The sequence spans 578 residues: CTP synthase 2 (578 aa).

The Glutamine amidotransferase type-1 domain occupies 300 to 553 (SIALVGKYTK…MLAASGKLNT (254 aa)). Active-site for GATase activity residues include Cys-399, His-526, and Glu-528.

The protein belongs to the CTP synthase family.

It catalyses the reaction UTP + L-glutamine + ATP + H2O = CTP + L-glutamate + ADP + phosphate + 2 H(+). The protein operates within pyrimidine metabolism; CTP biosynthesis via de novo pathway; CTP from UDP: step 2/2. Its function is as follows. Catalyzes the ATP-dependent amination of UTP to CTP with either L-glutamine or ammonia as the source of nitrogen. Constitutes the rate-limiting enzyme in the synthesis of cytosine nucleotides. The chain is CTP synthase 2 (ctps2) from Xenopus laevis (African clawed frog).